Reading from the N-terminus, the 213-residue chain is Superoxide dismutase [Fe] (213 aa).

Fe cation is bound by residues His-28, His-82, Asp-164, and His-168.

The protein belongs to the iron/manganese superoxide dismutase family. Homotetramer. Fe cation is required as a cofactor.

The enzyme catalyses 2 superoxide + 2 H(+) = H2O2 + O2. In terms of biological role, destroys superoxide anion radicals which are normally produced within the cells and which are toxic to biological systems. In Aquifex pyrophilus, this protein is Superoxide dismutase [Fe] (sodB).